The sequence spans 297 residues: Acetylglutamate kinase (297 aa).

Substrate is bound by residues 68 to 69 (GG), Arg-90, and Asn-195.

It belongs to the acetylglutamate kinase family. ArgB subfamily.

The protein localises to the cytoplasm. The enzyme catalyses N-acetyl-L-glutamate + ATP = N-acetyl-L-glutamyl 5-phosphate + ADP. Its pathway is amino-acid biosynthesis; L-arginine biosynthesis; N(2)-acetyl-L-ornithine from L-glutamate: step 2/4. Catalyzes the ATP-dependent phosphorylation of N-acetyl-L-glutamate. This is Acetylglutamate kinase from Chelativorans sp. (strain BNC1).